The chain runs to 203 residues: Small ribosomal subunit protein uS4 (203 aa).

The region spanning 93 to 156 is the S4 RNA-binding domain; that stretch reads RRLDNVVYRL…MKVPAILEAV (64 aa).

This sequence belongs to the universal ribosomal protein uS4 family. As to quaternary structure, part of the 30S ribosomal subunit. Contacts protein S5. The interaction surface between S4 and S5 is involved in control of translational fidelity.

Functionally, one of the primary rRNA binding proteins, it binds directly to 16S rRNA where it nucleates assembly of the body of the 30S subunit. With S5 and S12 plays an important role in translational accuracy. The protein is Small ribosomal subunit protein uS4 of Streptococcus pyogenes serotype M4 (strain MGAS10750).